Here is a 577-residue protein sequence, read N- to C-terminus: Methionine--tRNA ligase (577 aa).

A 'HIGH' region motif is present at residues 21–31; the sequence is PYANGPLHVGH. Zn(2+) contacts are provided by cysteine 153, cysteine 156, cysteine 166, and cysteine 169. The 'KMSKS' region motif lies at 355-359; that stretch reads QMSTS. Threonine 358 is a binding site for ATP.

It belongs to the class-I aminoacyl-tRNA synthetase family. MetG type 1 subfamily. As to quaternary structure, monomer. Requires Zn(2+) as cofactor.

The protein resides in the cytoplasm. The catalysed reaction is tRNA(Met) + L-methionine + ATP = L-methionyl-tRNA(Met) + AMP + diphosphate. In terms of biological role, is required not only for elongation of protein synthesis but also for the initiation of all mRNA translation through initiator tRNA(fMet) aminoacylation. This Rubrobacter xylanophilus (strain DSM 9941 / JCM 11954 / NBRC 16129 / PRD-1) protein is Methionine--tRNA ligase.